Reading from the N-terminus, the 333-residue chain is Autoinducer 2 import system permease protein LsrD (333 aa).

The next 10 helical transmembrane spans lie at 7-27 (YGWE…FGLS), 45-65 (ICIG…GIDI), 67-87 (FGST…AGVP), 90-110 (VAIP…AGLI), 118-138 (LVIT…LSGL), 162-182 (LFGL…FWLL), 212-232 (TLCM…ILLV), 240-260 (SDLG…GGAN), 261-281 (IYGG…VGYL), and 288-308 (IGTP…LVVV).

Belongs to the binding-protein-dependent transport system permease family. AraH/RbsC subfamily. In terms of assembly, the complex is composed of two ATP-binding proteins (LsrA), two transmembrane proteins (LsrC and LsrD) and a solute-binding protein (LsrB).

The protein resides in the cell inner membrane. In terms of biological role, part of the ABC transporter complex LsrABCD involved in autoinducer 2 (AI-2) import. Probably responsible for the translocation of the substrate across the membrane. This Yersinia pseudotuberculosis serotype IB (strain PB1/+) protein is Autoinducer 2 import system permease protein LsrD (lsrD).